Here is a 40-residue protein sequence, read N- to C-terminus: Beta-defensin 2 (40 aa).

3 disulfides stabilise this stretch: C7–C36, C14–C29, and C19–C37.

The protein belongs to the beta-defensin family. In terms of tissue distribution, neutrophilic granules.

The protein localises to the secreted. Has bactericidal activity. Active against E.coli ML35 and S.aureus 502A. The protein is Beta-defensin 2 (DEFB2) of Bos taurus (Bovine).